The chain runs to 39 residues: Photosystem II reaction center protein J (39 aa).

A helical membrane pass occupies residues 7–27 (IPLWIVAVVAGMGVIAVVGIF).

Belongs to the PsbJ family. As to quaternary structure, PSII is composed of 1 copy each of membrane proteins PsbA, PsbB, PsbC, PsbD, PsbE, PsbF, PsbH, PsbI, PsbJ, PsbK, PsbL, PsbM, PsbT, PsbX, PsbY, PsbZ, Psb30/Ycf12, peripheral proteins PsbO, CyanoQ (PsbQ), PsbU, PsbV and a large number of cofactors. It forms dimeric complexes.

It is found in the cellular thylakoid membrane. In terms of biological role, this protein is a component of the reaction center of photosystem II. Functionally, one of the components of the core complex of photosystem II (PSII). PSII is a light-driven water:plastoquinone oxidoreductase that uses light energy to abstract electrons from H(2)O, generating O(2) and a proton gradient subsequently used for ATP formation. It consists of a core antenna complex that captures photons, and an electron transfer chain that converts photonic excitation into a charge separation. The polypeptide is Photosystem II reaction center protein J (Picosynechococcus sp. (strain ATCC 27264 / PCC 7002 / PR-6) (Agmenellum quadruplicatum)).